We begin with the raw amino-acid sequence, 307 residues long: tRNA pseudouridine synthase B (307 aa).

The active-site Nucleophile is the Asp48.

The protein belongs to the pseudouridine synthase TruB family. Type 1 subfamily.

It carries out the reaction uridine(55) in tRNA = pseudouridine(55) in tRNA. In terms of biological role, responsible for synthesis of pseudouridine from uracil-55 in the psi GC loop of transfer RNAs. This chain is tRNA pseudouridine synthase B, found in Neisseria meningitidis serogroup B (strain ATCC BAA-335 / MC58).